A 72-amino-acid polypeptide reads, in one-letter code: Metallothionein-like protein 1 (72 aa).

This sequence belongs to the metallothionein superfamily. Type 15 family.

Metallothioneins have a high content of cysteine residues that bind various heavy metals. The protein is Metallothionein-like protein 1 of Erythranthe guttata (Yellow monkey flower).